The following is a 188-amino-acid chain: Threonylcarbamoyl-AMP synthase (188 aa).

Positions 3–188 (QLHPSDIKDI…RSGKILRNGQ (186 aa)) constitute a YrdC-like domain.

It belongs to the SUA5 family. TsaC subfamily.

The protein localises to the cytoplasm. It catalyses the reaction L-threonine + hydrogencarbonate + ATP = L-threonylcarbamoyladenylate + diphosphate + H2O. Its function is as follows. Required for the formation of a threonylcarbamoyl group on adenosine at position 37 (t(6)A37) in tRNAs that read codons beginning with adenine. Catalyzes the conversion of L-threonine, HCO(3)(-)/CO(2) and ATP to give threonylcarbamoyl-AMP (TC-AMP) as the acyladenylate intermediate, with the release of diphosphate. This is Threonylcarbamoyl-AMP synthase from Shewanella baltica (strain OS155 / ATCC BAA-1091).